The sequence spans 247 residues: Segregation and condensation protein A (247 aa).

This sequence belongs to the ScpA family. Component of a cohesin-like complex composed of ScpA, ScpB and the Smc homodimer, in which ScpA and ScpB bind to the head domain of Smc. The presence of the three proteins is required for the association of the complex with DNA.

The protein resides in the cytoplasm. Functionally, participates in chromosomal partition during cell division. May act via the formation of a condensin-like complex containing Smc and ScpB that pull DNA away from mid-cell into both cell halves. In Caldanaerobacter subterraneus subsp. tengcongensis (strain DSM 15242 / JCM 11007 / NBRC 100824 / MB4) (Thermoanaerobacter tengcongensis), this protein is Segregation and condensation protein A.